Here is a 55-residue protein sequence, read N- to C-terminus: Spermatid nuclear transition protein 1 (55 aa).

Over residues 1 to 42 (MSTSRKLKSQGMRRGKNRTPHKGVKRSGSKRKYRKSSLKSRK) the composition is skewed to basic residues. The disordered stretch occupies residues 1 to 55 (MSTSRKLKSQGMRRGKNRTPHKGVKRSGSKRKYRKSSLKSRKRCDDANRNLRSHL). Residues S9, S36, S37, and S40 each carry the phosphoserine modification.

This sequence belongs to the nuclear transition protein 1 family. In terms of tissue distribution, testis.

It is found in the nucleus. Its subcellular location is the chromosome. Plays a key role in the replacement of histones to protamine in the elongating spermatids of mammals. In condensing spermatids, loaded onto the nucleosomes, where it promotes the recruitment and processing of protamines, which are responsible for histone eviction. The chain is Spermatid nuclear transition protein 1 (TNP1) from Bos taurus (Bovine).